A 340-amino-acid chain; its full sequence is Gigasin-2 (340 aa).

The N-terminal stretch at 1–21 (MNKMSPLYVLALCCLATTVFA) is a signal peptide. 2 consecutive EGF-like domains span residues 22 to 57 (KYDC…EDCG) and 65 to 97 (TAAN…DMCE). 6 cysteine pairs are disulfide-bonded: Cys-25–Cys-39, Cys-33–Cys-45, Cys-47–Cys-56, Cys-69–Cys-79, Cys-73–Cys-85, and Cys-87–Cys-96.

As to expression, component of the organic matrix of calcified shell layers.

This Magallana gigas (Pacific oyster) protein is Gigasin-2.